The sequence spans 183 residues: Ribosome maturation factor RimM (183 aa).

In terms of domain architecture, PRC barrel spans 96–171 (PDEFYDHELE…VALIDPPEGL (76 aa)).

The protein belongs to the RimM family. As to quaternary structure, binds ribosomal protein uS19.

The protein localises to the cytoplasm. In terms of biological role, an accessory protein needed during the final step in the assembly of 30S ribosomal subunit, possibly for assembly of the head region. Essential for efficient processing of 16S rRNA. May be needed both before and after RbfA during the maturation of 16S rRNA. It has affinity for free ribosomal 30S subunits but not for 70S ribosomes. The protein is Ribosome maturation factor RimM of Rhodococcus jostii (strain RHA1).